We begin with the raw amino-acid sequence, 249 residues long: Putative SAP domain-containing protein 049L (249 aa).

3 stretches are compositionally biased toward basic and acidic residues: residues 1 to 12 (MAAPKAEGEDKP), 22 to 38 (PKPETKEVKKPKSKEFC), and 95 to 107 (KKAESSDDKKLDE). The interval 1–110 (MAAPKAEGED…DDKKLDEATG (110 aa)) is disordered. Positions 119–153 (LSKLTIQTLKGMCKTRNLKISGNKAALVQRLIEAD) constitute an SAP domain.

The polypeptide is Putative SAP domain-containing protein 049L (Frog virus 3 (isolate Goorha) (FV-3)).